The primary structure comprises 169 residues: Putative outer membrane protein BBA03 (169 aa).

Its subcellular location is the cell outer membrane. This chain is Putative outer membrane protein BBA03, found in Borreliella burgdorferi (strain ATCC 35210 / DSM 4680 / CIP 102532 / B31) (Borrelia burgdorferi).